The primary structure comprises 499 residues: Lysine--tRNA ligase (499 aa).

E408 and E415 together coordinate Mg(2+).

Belongs to the class-II aminoacyl-tRNA synthetase family. In terms of assembly, homodimer. Requires Mg(2+) as cofactor.

The protein resides in the cytoplasm. The enzyme catalyses tRNA(Lys) + L-lysine + ATP = L-lysyl-tRNA(Lys) + AMP + diphosphate. The chain is Lysine--tRNA ligase from Bacillus mycoides (strain KBAB4) (Bacillus weihenstephanensis).